We begin with the raw amino-acid sequence, 556 residues long: 2-succinyl-5-enolpyruvyl-6-hydroxy-3-cyclohexene-1-carboxylate synthase (556 aa).

This sequence belongs to the TPP enzyme family. MenD subfamily. Homodimer. It depends on Mg(2+) as a cofactor. Mn(2+) serves as cofactor. The cofactor is thiamine diphosphate.

The catalysed reaction is isochorismate + 2-oxoglutarate + H(+) = 5-enolpyruvoyl-6-hydroxy-2-succinyl-cyclohex-3-ene-1-carboxylate + CO2. The protein operates within quinol/quinone metabolism; 1,4-dihydroxy-2-naphthoate biosynthesis; 1,4-dihydroxy-2-naphthoate from chorismate: step 2/7. It participates in quinol/quinone metabolism; menaquinone biosynthesis. In terms of biological role, catalyzes the thiamine diphosphate-dependent decarboxylation of 2-oxoglutarate and the subsequent addition of the resulting succinic semialdehyde-thiamine pyrophosphate anion to isochorismate to yield 2-succinyl-5-enolpyruvyl-6-hydroxy-3-cyclohexene-1-carboxylate (SEPHCHC). The polypeptide is 2-succinyl-5-enolpyruvyl-6-hydroxy-3-cyclohexene-1-carboxylate synthase (Shigella sonnei (strain Ss046)).